The sequence spans 150 residues: SsrA-binding protein (150 aa).

It belongs to the SmpB family.

The protein localises to the cytoplasm. Its function is as follows. Required for rescue of stalled ribosomes mediated by trans-translation. Binds to transfer-messenger RNA (tmRNA), required for stable association of tmRNA with ribosomes. tmRNA and SmpB together mimic tRNA shape, replacing the anticodon stem-loop with SmpB. tmRNA is encoded by the ssrA gene; the 2 termini fold to resemble tRNA(Ala) and it encodes a 'tag peptide', a short internal open reading frame. During trans-translation Ala-aminoacylated tmRNA acts like a tRNA, entering the A-site of stalled ribosomes, displacing the stalled mRNA. The ribosome then switches to translate the ORF on the tmRNA; the nascent peptide is terminated with the 'tag peptide' encoded by the tmRNA and targeted for degradation. The ribosome is freed to recommence translation, which seems to be the essential function of trans-translation. The chain is SsrA-binding protein from Borrelia garinii subsp. bavariensis (strain ATCC BAA-2496 / DSM 23469 / PBi) (Borreliella bavariensis).